Consider the following 85-residue polypeptide: Beta-toxin BmKAS (85 aa).

The first 19 residues, 1–19 (MKTVIFLIVSSLLLIGVKT), serve as a signal peptide directing secretion. An LCN-type CS-alpha/beta domain is found at 20 to 82 (DNGYLLDKYT…LWNYNTNKCN (63 aa)). 4 disulfides stabilise this stretch: Cys31–Cys81, Cys35–Cys56, Cys42–Cys63, and Cys46–Cys65.

Expressed by the venom gland.

The protein localises to the secreted. Its function is as follows. Beta toxins bind voltage-independently at site-4 of sodium channels (Nav) and shift the voltage of activation toward more negative potentials thereby affecting sodium channel activation and promoting spontaneous and repetitive firing. It binds to distinct receptor sites of mammal and insect voltage-gated sodium channels. It displays antinociceptive effect in rat models, which is due to its specific modulation of sodium channels of sensory neurons. It also significantly stimulates the binding of [3H]-ryanodine to ryanodine receptors on the sarcoplasmic reticulum of the skeletal muscle through an indirect mechanism. And it promotes noradrenaline release from the rat hippocampus slice. The chain is Beta-toxin BmKAS from Olivierus martensii (Manchurian scorpion).